We begin with the raw amino-acid sequence, 288 residues long: Pyridoxal kinase PdxY (288 aa).

Substrate contacts are provided by residues serine 12 and 47 to 48 (TQ). ATP-binding positions include aspartate 114, glutamate 151, lysine 184, and 211–214 (RPLL). Residue aspartate 225 coordinates substrate.

This sequence belongs to the pyridoxine kinase family. PdxY subfamily. As to quaternary structure, homodimer. The cofactor is Mg(2+).

It carries out the reaction pyridoxal + ATP = pyridoxal 5'-phosphate + ADP + H(+). The protein operates within cofactor metabolism; pyridoxal 5'-phosphate salvage; pyridoxal 5'-phosphate from pyridoxal: step 1/1. Pyridoxal kinase involved in the salvage pathway of pyridoxal 5'-phosphate (PLP). Catalyzes the phosphorylation of pyridoxal to PLP. The protein is Pyridoxal kinase PdxY of Pseudomonas syringae pv. syringae (strain B728a).